The following is a 529-amino-acid chain: O-acetylstemmadenine oxidase (529 aa).

Positions 1–23 (MIKKVPIVLSIFCFLLLLSSSHG) are cleaved as a signal peptide. The cysteines at positions 32 and 92 are disulfide-linked. N-linked (GlcNAc...) asparagine glycosylation occurs at Asn52. Residues 70–244 (KSPKPLAIIT…VSWKVKLVKV (175 aa)) enclose the FAD-binding PCMH-type domain. Residues 102–108 (IRSGGAD), Ser113, 168–169 (VS), 173–177 (GIGGH), and Phe183 contribute to the FAD site. Asn293 carries N-linked (GlcNAc...) asparagine glycosylation. Trp465 is a binding site for FAD.

It belongs to the oxygen-dependent FAD-linked oxidoreductase family. Requires FAD as cofactor. As to expression, expressed in leaf epidermis.

It is found in the endoplasmic reticulum. Its subcellular location is the vacuole. The protein resides in the vesicle. The catalysed reaction is O-acetyl-15alpha-stemmadenine + O2 = precondylocarpine acetate + H2O2. It participates in alkaloid biosynthesis. In terms of biological role, component of the seco-iridoid and derivatives monoterpenoid indole alkaloids (MIAs, e.g. vinblastine, catharanthine, tabersonine, vincadifformine, vindoline, vincristine, quinine and strychnine) biosynthesis pathway. Converts O-acetylstemmadenine (OAS) to reactive acetylated intermediates, likely dihydroprecondylocarpine acetate. This Catharanthus roseus (Madagascar periwinkle) protein is O-acetylstemmadenine oxidase.